Reading from the N-terminus, the 190-residue chain is Peptidyl-tRNA hydrolase (190 aa).

TRNA is bound at residue Tyr-14. His-19 (proton acceptor) is an active-site residue. TRNA-binding residues include Tyr-64 and Asn-66.

Belongs to the PTH family. As to quaternary structure, monomer.

The protein resides in the cytoplasm. The catalysed reaction is an N-acyl-L-alpha-aminoacyl-tRNA + H2O = an N-acyl-L-amino acid + a tRNA + H(+). Its function is as follows. Hydrolyzes ribosome-free peptidyl-tRNAs (with 1 or more amino acids incorporated), which drop off the ribosome during protein synthesis, or as a result of ribosome stalling. Functionally, catalyzes the release of premature peptidyl moieties from peptidyl-tRNA molecules trapped in stalled 50S ribosomal subunits, and thus maintains levels of free tRNAs and 50S ribosomes. The sequence is that of Peptidyl-tRNA hydrolase from Rhodopirellula baltica (strain DSM 10527 / NCIMB 13988 / SH1).